A 231-amino-acid polypeptide reads, in one-letter code: Protein crossbronx homolog (231 aa).

One can recognise a UBC core domain in the interval 14–168 (LQEYKILTEY…VEECVRLSQA (155 aa)).

Belongs to the ubiquitin-conjugating enzyme family. FTS subfamily.

This Culex quinquefasciatus (Southern house mosquito) protein is Protein crossbronx homolog.